The chain runs to 468 residues: Ribulose bisphosphate carboxylase large chain (468 aa).

N6,N6,N6-trimethyllysine is present on K5. Residues N114 and T164 each contribute to the substrate site. The Proton acceptor role is filled by K166. Position 168 (K168) interacts with substrate. 3 residues coordinate Mg(2+): K192, D194, and E195. Residue K192 is modified to N6-carboxylysine. Catalysis depends on H285, which acts as the Proton acceptor. Residues R286, H318, and S370 each contribute to the substrate site.

This sequence belongs to the RuBisCO large chain family. Type I subfamily. In terms of assembly, heterohexadecamer of 8 large chains and 8 small chains; disulfide-linked. The disulfide link is formed within the large subunit homodimers. Mg(2+) serves as cofactor. Post-translationally, the disulfide bond which can form in the large chain dimeric partners within the hexadecamer appears to be associated with oxidative stress and protein turnover.

The protein localises to the plastid. It is found in the chloroplast. The catalysed reaction is 2 (2R)-3-phosphoglycerate + 2 H(+) = D-ribulose 1,5-bisphosphate + CO2 + H2O. It catalyses the reaction D-ribulose 1,5-bisphosphate + O2 = 2-phosphoglycolate + (2R)-3-phosphoglycerate + 2 H(+). Its function is as follows. RuBisCO catalyzes two reactions: the carboxylation of D-ribulose 1,5-bisphosphate, the primary event in carbon dioxide fixation, as well as the oxidative fragmentation of the pentose substrate in the photorespiration process. Both reactions occur simultaneously and in competition at the same active site. This Anthospermum herbaceum protein is Ribulose bisphosphate carboxylase large chain.